The following is a 174-amino-acid chain: Ribosome maturation factor RimM (174 aa).

Residues 97-173 (GNKFYFHEVI…DLPVGLVEMY (77 aa)) enclose the PRC barrel domain.

This sequence belongs to the RimM family. Binds ribosomal protein uS19.

The protein resides in the cytoplasm. Its function is as follows. An accessory protein needed during the final step in the assembly of 30S ribosomal subunit, possibly for assembly of the head region. Essential for efficient processing of 16S rRNA. May be needed both before and after RbfA during the maturation of 16S rRNA. It has affinity for free ribosomal 30S subunits but not for 70S ribosomes. The sequence is that of Ribosome maturation factor RimM from Flavobacterium johnsoniae (strain ATCC 17061 / DSM 2064 / JCM 8514 / BCRC 14874 / CCUG 350202 / NBRC 14942 / NCIMB 11054 / UW101) (Cytophaga johnsonae).